Reading from the N-terminus, the 504-residue chain is 2,3-bisphosphoglycerate-independent phosphoglycerate mutase (504 aa).

Mn(2+) is bound by residues Asp13 and Ser63. Ser63 (phosphoserine intermediate) is an active-site residue. Residues His124, 153 to 154 (RD), Arg183, Arg189, 254 to 257 (RADR), and Lys330 each bind substrate. Mn(2+)-binding residues include Asp397, His401, Asp438, His439, and His457.

Belongs to the BPG-independent phosphoglycerate mutase family. Monomer. Mn(2+) is required as a cofactor.

It carries out the reaction (2R)-2-phosphoglycerate = (2R)-3-phosphoglycerate. It participates in carbohydrate degradation; glycolysis; pyruvate from D-glyceraldehyde 3-phosphate: step 3/5. Its function is as follows. Catalyzes the interconversion of 2-phosphoglycerate and 3-phosphoglycerate. This chain is 2,3-bisphosphoglycerate-independent phosphoglycerate mutase, found in Rhodopseudomonas palustris (strain ATCC BAA-98 / CGA009).